A 260-amino-acid chain; its full sequence is Diphthine synthase (260 aa).

Residues Leu9, Asp85, Ile88, 113–114, Leu168, Ala208, and His233 each bind S-adenosyl-L-methionine; that span reads TA.

It belongs to the diphthine synthase family. As to quaternary structure, homodimer.

It carries out the reaction 2-[(3S)-amino-3-carboxypropyl]-L-histidyl-[translation elongation factor 2] + 3 S-adenosyl-L-methionine = diphthine-[translation elongation factor 2] + 3 S-adenosyl-L-homocysteine + 3 H(+). It participates in protein modification; peptidyl-diphthamide biosynthesis. Functionally, S-adenosyl-L-methionine-dependent methyltransferase that catalyzes the trimethylation of the amino group of the modified target histidine residue in translation elongation factor 2 (EF-2), to form an intermediate called diphthine. The three successive methylation reactions represent the second step of diphthamide biosynthesis. This Halobacterium salinarum (strain ATCC 29341 / DSM 671 / R1) protein is Diphthine synthase.